Here is a 48-residue protein sequence, read N- to C-terminus: MMGREHDKQAQFTPDHLGTKPVAYKRNKGKKMHNKSNEQPDVIQTKGE.

The segment at methionine 1–glutamate 48 is disordered. Positions alanine 23–asparagine 34 are enriched in basic residues.

This sequence belongs to the SspN family.

Its subcellular location is the spore core. This Bacillus pumilus (strain SAFR-032) protein is Small, acid-soluble spore protein N.